Consider the following 668-residue polypeptide: CLK4-associating serine/arginine rich protein (668 aa).

Serine 101 is subject to Phosphoserine. Disordered stretches follow at residues 173–232 (AEVE…GMAD) and 252–668 (AKAL…HYRH). Over residues 182–214 (PEEEESPAEEESNSDEDEVIPDIDVEVDVDELN) the composition is skewed to acidic residues. Over residues 265–283 (RRSRRQRREFREKRLRGRK) the composition is skewed to basic residues. A phosphoserine mark is found at serine 285 and serine 294. Over residues 290 to 313 (ARRDSPTYDPYKRSPSESSSESRS) the composition is skewed to basic and acidic residues. Phosphothreonine is present on threonine 327. Serine 331 and serine 335 each carry phosphoserine. Composition is skewed to low complexity over residues 340 to 353 (AAAA…GAAP) and 378 to 395 (SSSS…SRSS). The segment covering 396–435 (SRSRRGYYRSGRHARSRSRSWSRSRSRSRRYSRSRSRGRR) has biased composition (basic residues). The segment covering 436 to 446 (HSDGGSRDGHR) has biased composition (basic and acidic residues). Over residues 475 to 486 (RGARGPRHHSSS) the composition is skewed to basic residues. Composition is skewed to low complexity over residues 487–510 (HSRS…SRSQ) and 518–527 (QSHSQSQSHS). Serine 541 carries the phosphoserine modification. Threonine 567 is subject to Phosphothreonine. A coiled-coil region spans residues 579–641 (ALNRQFKADK…ERQYSRQSRS (63 aa)). Composition is skewed to basic and acidic residues over residues 584-611 (FKAD…ELRA) and 619-635 (KERE…ERQY). Residues 636-645 (SRQSRSPSPR) are compositionally biased toward low complexity. Basic residues predominate over residues 653-668 (SRRRSRSRSRSPHYRH).

The protein belongs to the splicing factor SR family. As to quaternary structure, probably interacts with CLK4. In terms of processing, phosphorylated in vitro by CLK4. As to expression, highly expressed in brain. Expressed at intermediate level in lung and liver. In brain, it is expressed in the hippocampus, cerebellum and olfactory bulb.

The protein localises to the nucleus. It is found in the nucleoplasm. Functionally, probably functions as an alternative splicing regulator. May regulate the mRNA splicing of genes such as CLK1. May act by regulating members of the CLK kinase family. The chain is CLK4-associating serine/arginine rich protein (Clasrp) from Mus musculus (Mouse).